We begin with the raw amino-acid sequence, 363 residues long: Suberization-associated anionic peroxidase (363 aa).

A signal peptide spans 1-20 (MGFRLSHLSLALSFVALALA). Asn36 is a glycosylation site (N-linked (GlcNAc...) asparagine). Intrachain disulfides connect Cys80–Cys159 and Cys111–Cys116. The active-site Proton acceptor is His109. Residues Asp110, Val113, Gly115, and Asp117 each coordinate Ca(2+). Asn126, Asn161, and Asn199 each carry an N-linked (GlcNAc...) asparagine glycan. Disulfide bonds link Cys166/Cys352 and Cys245/Cys264. Pro208 serves as a coordination point for substrate. Asn213 and Asn225 each carry an N-linked (GlcNAc...) asparagine glycan. A heme b-binding site is contributed by His238. Ca(2+) is bound at residue Thr239. Asn263 carries an N-linked (GlcNAc...) asparagine glycan. Residues Asp277, Thr279, and Asp284 each coordinate Ca(2+).

Belongs to the peroxidase family. Classical plant (class III) peroxidase subfamily. The cofactor is Ca(2+). Heme b is required as a cofactor.

It is found in the secreted. The enzyme catalyses 2 a phenolic donor + H2O2 = 2 a phenolic radical donor + 2 H2O. Removal of H(2)O(2), oxidation of toxic reductants, biosynthesis and degradation of lignin, suberization, auxin catabolism, response to environmental stresses such as wounding, pathogen attack and oxidative stress. These functions might be dependent on each isozyme/isoform in each plant tissue. In terms of biological role, suggested to catalyze the deposition of the aromatic residues of suberin on the cell wall and thus play a role in cell-suberization. The chain is Suberization-associated anionic peroxidase from Solanum tuberosum (Potato).